The sequence spans 373 residues: UDP-N-acetylenolpyruvoylglucosamine reductase (373 aa).

The region spanning 30–203 (LACTANSVVT…SRVGFRLHTD (174 aa)) is the FAD-binding PCMH-type domain. Arg180 is an active-site residue. Ser258 (proton donor) is an active-site residue. The active site involves Glu356.

This sequence belongs to the MurB family. FAD is required as a cofactor.

It localises to the cytoplasm. The enzyme catalyses UDP-N-acetyl-alpha-D-muramate + NADP(+) = UDP-N-acetyl-3-O-(1-carboxyvinyl)-alpha-D-glucosamine + NADPH + H(+). Its pathway is cell wall biogenesis; peptidoglycan biosynthesis. Its function is as follows. Cell wall formation. This Psychrobacter arcticus (strain DSM 17307 / VKM B-2377 / 273-4) protein is UDP-N-acetylenolpyruvoylglucosamine reductase.